Reading from the N-terminus, the 365-residue chain is Caffeic acid 3-O-methyltransferase (365 aa).

(E)-ferulate is bound at residue Asn131. S-adenosyl-L-homocysteine is bound by residues Gly208, Asp231, Asp251, Met252, Met264, and Lys265. Catalysis depends on His269, which acts as the Proton acceptor. Asp270 is a (E)-5-hydroxyferulate binding site. Catalysis depends on residues Glu297 and Glu329.

This sequence belongs to the class I-like SAM-binding methyltransferase superfamily. Cation-independent O-methyltransferase family. COMT subfamily. In terms of assembly, homodimer. As to expression, more abundant in roots and stems.

It catalyses the reaction (E)-caffeate + S-adenosyl-L-methionine = (E)-ferulate + S-adenosyl-L-homocysteine + H(+). It carries out the reaction (E)-5-hydroxyferulate + S-adenosyl-L-methionine = (E)-sinapate + S-adenosyl-L-homocysteine + H(+). It participates in aromatic compound metabolism; phenylpropanoid biosynthesis. Functionally, catalyzes the conversion of caffeic acid to ferulic acid and of 5-hydroxyferulic acid to sinapic acid. The resulting products may subsequently be converted to the corresponding alcohols that are incorporated into lignins. This chain is Caffeic acid 3-O-methyltransferase, found in Medicago sativa (Alfalfa).